We begin with the raw amino-acid sequence, 932 residues long: DNA mismatch repair protein MutS (932 aa).

Gly-615–Ser-622 lines the ATP pocket.

Belongs to the DNA mismatch repair MutS family.

This protein is involved in the repair of mismatches in DNA. It is possible that it carries out the mismatch recognition step. This protein has a weak ATPase activity. The sequence is that of DNA mismatch repair protein MutS from Clostridium botulinum (strain Hall / ATCC 3502 / NCTC 13319 / Type A).